A 344-amino-acid chain; its full sequence is Membrane progestin receptor delta (344 aa).

The Cytoplasmic segment spans residues 1–51 (MLSLKLPQLLQVHQVPRVFWEDGIMSGYRRPTSSALDCVLSSFQMTNETVN). A helical transmembrane segment spans residues 52–72 (IWTHFLPTWYFLWRLLALAGG). Topologically, residues 73 to 83 (PGFRAEPYHWP) are extracellular. The chain crosses the membrane as a helical span at residues 84–104 (LLVFLLPACLYPFASCCAHTF). Residues 105–113 (SSMSPRMRH) lie on the Cytoplasmic side of the membrane. A helical transmembrane segment spans residues 114-134 (ICYFLDYGALSLYSLGCAFPY). At 135 to 147 (AAYSMPASWLHGH) the chain is on the extracellular side. Residues 148 to 168 (LHQFFVPAAALNSFLCTGLSC) form a helical membrane-spanning segment. Topologically, residues 169 to 217 (YSRFLELESPGLSKVLRTGAFAYPFLFDNLPLFYRLGLCWGRGHGCGQE) are cytoplasmic. A helical membrane pass occupies residues 218–238 (ALSTSHGYHLFCALLTGFLFA). At 239-258 (SHLPERLAPGRFDYIGHSHQ) the chain is on the extracellular side. A helical transmembrane segment spans residues 259–279 (LFHICAVLGTHFQLEAVLADM). Topologically, residues 280 to 292 (GSRRAWLATQEPA) are cytoplasmic. A helical transmembrane segment spans residues 293–313 (LGLAGTVATLVLAAAGNLLII). The Extracellular portion of the chain corresponds to 314–344 (AAFTATLLRAPSTCPLLQGGPLEGGTQAKQQ).

This sequence belongs to the ADIPOR family. Homodimer. Brain specific. Highly expressed in the hypothalamus, also expressed in forebrain, amygdala, corpus callosum and spinal cord.

The protein localises to the cell membrane. Its function is as follows. Plasma membrane progesterone (P4) receptor coupled to G proteins. Seems to act through a G(s) mediated pathway. Involved in neurosteroid inhibition of apoptosis. May be involved in regulating rapid P4 signaling in the nervous system. Also binds dehydroepiandrosterone (DHEA), pregnanolone, pregnenolone and allopregnanolone. The sequence is that of Membrane progestin receptor delta from Homo sapiens (Human).